The sequence spans 369 residues: Transcription initiation factor IIA large subunit (369 aa).

Composition is skewed to polar residues over residues 113 to 210 (HGNS…QNSP) and 218 to 233 (TESSNTTPANSRNDVP). Residues 113–248 (HGNSNYYSPP…IHDLDDAGSP (136 aa)) form a disordered region. Position 249 is a phosphoserine (serine 249). The interval 282 to 319 (IEDNEDEKKPPVDTPSDEAINSDLDDPDSDEAPETEEG) is disordered. Residues 304–319 (DLDDPDSDEAPETEEG) show a composition bias toward acidic residues.

Belongs to the TFIIA subunit 1 family. TFIIA is a heterodimer of the large subunit and the small subunit gamma.

The protein localises to the nucleus. In terms of biological role, TFIIA is a component of the transcription machinery of RNA polymerase II and plays an important role in transcriptional activation. TFIIA in a complex with tbp mediates transcriptional activity. The chain is Transcription initiation factor IIA large subunit from Schizosaccharomyces pombe (strain 972 / ATCC 24843) (Fission yeast).